Here is a 1458-residue protein sequence, read N- to C-terminus: Phospholipase B1, membrane-associated (1458 aa).

An N-terminal signal peptide occupies residues 1–21 (MGLRPGIFLLELLLLLGQGTP). The Extracellular segment spans residues 22–1417 (QIHTSPRKST…QAEEAPEVLY (1396 aa)). 3 consecutive repeat copies span residues 39 to 347 (ETLK…YRNS), 362 to 707 (VREG…YKNS), and 708 to 1054 (MQGH…PRNS). Residues 39–1402 (ETLKNSPFPC…SPYLYTLRNS (1364 aa)) form a 4 X 308-326 AA approximate repeats region. Asparagine 173 and asparagine 240 each carry an N-linked (GlcNAc...) asparagine glycan. Serine 400 is an active-site residue. An N-linked (GlcNAc...) asparagine glycan is attached at asparagine 493. Residue aspartate 514 is part of the active site. Asparagine 529 and asparagine 590 each carry an N-linked (GlcNAc...) asparagine glycan. Histidine 655 is a catalytic residue. Residues asparagine 690, asparagine 783, asparagine 797, asparagine 809, asparagine 1055, asparagine 1113, asparagine 1275, and asparagine 1378 are each glycosylated (N-linked (GlcNAc...) asparagine). Copy 4 of the repeat occupies 1064 to 1402 (IENWGSDFLC…SPYLYTLRNS (339 aa)). Residues 1403–1445 (RLLPDQAEEAPEVLYWAVPVAAGVGLVVGIIGTVVWRCRRGGR) are necessary for membrane localization. A helical membrane pass occupies residues 1418 to 1438 (WAVPVAAGVGLVVGIIGTVVW). At 1439–1458 (RCRRGGRREDPPMSLRTVAL) the chain is on the cytoplasmic side.

This sequence belongs to the 'GDSL' lipolytic enzyme family. Phospholipase B1 subfamily. In terms of processing, undergoes proteolytic cleavage in the ileum. In terms of tissue distribution, expressed in the epidermis (at protein level).

It is found in the apical cell membrane. It catalyses the reaction a 1,2-diacyl-sn-glycero-3-phosphocholine + H2O = a 1-acyl-sn-glycero-3-phosphocholine + a fatty acid + H(+). The catalysed reaction is a 1-O-alkyl-2-acyl-sn-glycero-3-phosphocholine + H2O = a 1-O-alkyl-sn-glycero-3-phosphocholine + a fatty acid + H(+). The enzyme catalyses a 1-acyl-sn-glycero-3-phosphocholine + H2O = sn-glycerol 3-phosphocholine + a fatty acid + H(+). It carries out the reaction a triacylglycerol + H2O = a diacylglycerol + a fatty acid + H(+). It catalyses the reaction 1,2-dihexadecanoyl-sn-glycero-3-phosphocholine + H2O = 1-hexadecanoyl-sn-glycero-3-phosphocholine + hexadecanoate + H(+). The catalysed reaction is 1-hexadecanoyl-2-(9Z-octadecenoyl)-sn-glycero-3-phosphocholine + H2O = 1-hexadecanoyl-sn-glycero-3-phosphocholine + (9Z)-octadecenoate + H(+). The enzyme catalyses 1,2-di-(9Z-octadecenoyl)-sn-glycero-3-phosphocholine + H2O = 1-(9Z-octadecenoyl)-sn-glycero-3-phosphocholine + (9Z)-octadecenoate + H(+). It carries out the reaction 1-hexadecanoyl-2-(9Z,12Z-octadecadienoyl)-sn-glycero-3-phosphocholine + H2O = (9Z,12Z)-octadecadienoate + 1-hexadecanoyl-sn-glycero-3-phosphocholine + H(+). It catalyses the reaction 1-hexadecanoyl-2-(9Z,12Z-octadecadienoyl)-sn-glycero-3-phosphocholine + H2O = 2-(9Z,12Z-octadecadienoyl)-sn-glycero-3-phosphocholine + hexadecanoate + H(+). The catalysed reaction is 1-hexadecanoyl-2-(9Z-octadecenoyl)-sn-glycero-3-phosphoethanolamine + H2O = 1-hexadecanoyl-sn-glycero-3-phosphoethanolamine + (9Z)-octadecenoate + H(+). The enzyme catalyses 1-hexadecanoyl-2-(9Z-octadecenoyl)-sn-glycero-3-phospho-(1'-sn-glycerol) + H2O = 1-hexadecanoyl-sn-glycero-3-phospho-(1'-sn-glycerol) + (9Z)-octadecenoate + H(+). It carries out the reaction 1,2-dihexadecanoyl-sn-glycero-3-phosphocholine + 2 H2O = sn-glycerol 3-phosphocholine + 2 hexadecanoate + 2 H(+). It catalyses the reaction 1-O-hexadecyl-2-(9Z)-octadecenoyl-sn-glycero-3-phosphocholine + H2O = 1-O-hexadecyl-sn-glycero-3-phosphocholine + (9Z)-octadecenoate + H(+). The catalysed reaction is 1-hexadecanoyl-sn-glycero-3-phosphocholine + H2O = sn-glycerol 3-phosphocholine + hexadecanoate + H(+). The enzyme catalyses 1,2,3-tri-(9Z-octadecenoyl)-glycerol + H2O = di-(9Z)-octadecenoylglycerol + (9Z)-octadecenoate + H(+). It carries out the reaction 1-hexadecanoyl-2-(9Z)-octadecenoyl-3-octadecanoyl-sn-glycerol + H2O = 1-hexadecanoyl-2-(9Z-octadecenoyl)-sn-glycerol + octadecanoate + H(+). It catalyses the reaction 1,3-dihexadecanoyl-2-(9Z-octadecenoyl)glycerol + H2O = 1,3-dihexadecanoylglycerol + (9Z)-octadecenoate + H(+). The catalysed reaction is 1,3-dihexadecanoyl-2-(9Z-octadecenoyl)glycerol + H2O = 1-hexadecanoyl-2-(9Z-octadecenoyl)-glycerol + hexadecanoate + H(+). The enzyme catalyses 1-hexadecanoyl-2-(9Z)-octadecenoyl-3-octadecanoyl-sn-glycerol + H2O = 1-hexadecanoyl-3-octadecanoyl-sn-glycerol + (9Z)-octadecenoate + H(+). It carries out the reaction 1-hexadecanoyl-2-(9Z)-octadecenoyl-3-octadecanoyl-sn-glycerol + H2O = 2-(9Z-octadecenoyl)-3-octadecanoyl-sn-glycerol + hexadecanoate + H(+). It catalyses the reaction 1-octadecanoyl-2-(9Z,12Z)-octadecadienoyl-sn-glycerol + H2O = 1-octadecanoyl-sn-glycerol + (9Z,12Z)-octadecadienoate + H(+). The catalysed reaction is 1,2-di-(9Z-octadecenoyl)-sn-glycerol + H2O = 1-(9Z-octadecenoyl)-sn-glycerol + (9Z)-octadecenoate + H(+). The enzyme catalyses 2,3-di-(9Z)-octadecenoyl-sn-glycerol + H2O = 3-(9Z-octadecenoyl)-sn-glycerol + (9Z)-octadecenoate + H(+). It carries out the reaction 1,3-di-(9Z-octadecenoyl)-glycerol + H2O = 1-(9Z-octadecenoyl)-glycerol + (9Z)-octadecenoate + H(+). It catalyses the reaction 1-(9Z-octadecenoyl)-glycerol + H2O = glycerol + (9Z)-octadecenoate + H(+). The catalysed reaction is 2-(9Z-octadecenoyl)-glycerol + H2O = glycerol + (9Z)-octadecenoate + H(+). Calcium-independent membrane-associated phospholipase that catalyzes complete diacylation of phospholipids by hydrolyzing both sn-1 and sn-2 fatty acyl chains attached to the glycerol backbone (phospholipase B activity). Has dual phospholipase and lysophospholipase activities toward diacylphospholipids. Preferentially cleaves sn-2 ester bonds over sn-1 bonds. Acts as a lipase toward glycerolipid substrates. Hydrolyzes fatty acyl chains of diacylglycerols with preference for the sn-2 position and of triacylglycerols with not positional selectivity. May also hydrolyze long chain retinyl esters such as retinyl palmitate. May contribute to digestion of dietary phospholipids, glycerolipids and retinoids, facilitating lipid absorption at the brush border. The polypeptide is Phospholipase B1, membrane-associated (PLB1) (Homo sapiens (Human)).